Here is a 192-residue protein sequence, read N- to C-terminus: NADH-quinone oxidoreductase subunit B 1 (192 aa).

[4Fe-4S] cluster contacts are provided by Cys-71, Cys-72, Cys-136, and Cys-166.

Belongs to the complex I 20 kDa subunit family. As to quaternary structure, NDH-1 is composed of 14 different subunits. Subunits NuoB, C, D, E, F, and G constitute the peripheral sector of the complex. The cofactor is [4Fe-4S] cluster.

It localises to the cell inner membrane. It catalyses the reaction a quinone + NADH + 5 H(+)(in) = a quinol + NAD(+) + 4 H(+)(out). In terms of biological role, NDH-1 shuttles electrons from NADH, via FMN and iron-sulfur (Fe-S) centers, to quinones in the respiratory chain. The immediate electron acceptor for the enzyme in this species is believed to be ubiquinone. Couples the redox reaction to proton translocation (for every two electrons transferred, four hydrogen ions are translocated across the cytoplasmic membrane), and thus conserves the redox energy in a proton gradient. The polypeptide is NADH-quinone oxidoreductase subunit B 1 (Rhizobium meliloti (strain 1021) (Ensifer meliloti)).